The following is a 527-amino-acid chain: Coiled-coil domain-containing protein 148 (527 aa).

2 coiled-coil regions span residues 289–353 and 401–438; these read LAKD…TEIK and LEKR…VAVQ.

The protein is Coiled-coil domain-containing protein 148 (Ccdc148) of Mus musculus (Mouse).